The following is a 199-amino-acid chain: SCO2-like protein RC0042 (199 aa).

The protein belongs to the SCO1/2 family.

The polypeptide is SCO2-like protein RC0042 (Rickettsia conorii (strain ATCC VR-613 / Malish 7)).